Consider the following 614-residue polypeptide: UvrABC system protein C (614 aa).

The GIY-YIG domain occupies threonine 14–isoleucine 91. Positions asparagine 196 to leucine 231 constitute a UVR domain. The disordered stretch occupies residues leucine 595 to proline 614.

This sequence belongs to the UvrC family. Interacts with UvrB in an incision complex.

The protein resides in the cytoplasm. The UvrABC repair system catalyzes the recognition and processing of DNA lesions. UvrC both incises the 5' and 3' sides of the lesion. The N-terminal half is responsible for the 3' incision and the C-terminal half is responsible for the 5' incision. This is UvrABC system protein C from Streptococcus pneumoniae (strain Taiwan19F-14).